The primary structure comprises 709 residues: ATP-binding cassette sub-family F member 3 (709 aa).

N-acetylalanine is present on Ala-2. Ser-83 is subject to Phosphoserine. Over residues 129–143 (RLKAKQEKRSEKDTL) the composition is skewed to basic and acidic residues. Positions 129–171 (RLKAKQEKRSEKDTLKTSNPLVLEEASASQAGSRKESRLESSG) are disordered. A phosphoserine mark is found at Ser-155, Ser-157, and Ser-161. A compositionally biased stretch (basic and acidic residues) spans 161–171 (SRKESRLESSG). ABC transporter domains are found at residues 178–424 (VRIE…LNQQ) and 492–707 (LQLD…RREG). 210-217 (GRNGLGKT) contacts ATP. Ser-283 carries the phosphoserine modification. Residue 525–532 (GENGAGKS) participates in ATP binding.

The protein belongs to the ABC transporter superfamily. ABCF family. EF3 subfamily.

Its function is as follows. Displays an antiviral effect against flaviviruses in the presence of OAS1B. In Pongo abelii (Sumatran orangutan), this protein is ATP-binding cassette sub-family F member 3 (ABCF3).